The following is a 596-amino-acid chain: Elongation factor 4 (596 aa).

One can recognise a tr-type G domain in the interval 2–184 (KHIRNFSIIA…TIVAQIPSPE (183 aa)). Residues 14-19 (DHGKST) and 131-134 (NKID) contribute to the GTP site.

Belongs to the TRAFAC class translation factor GTPase superfamily. Classic translation factor GTPase family. LepA subfamily.

The protein resides in the cell inner membrane. The enzyme catalyses GTP + H2O = GDP + phosphate + H(+). Its function is as follows. Required for accurate and efficient protein synthesis under certain stress conditions. May act as a fidelity factor of the translation reaction, by catalyzing a one-codon backward translocation of tRNAs on improperly translocated ribosomes. Back-translocation proceeds from a post-translocation (POST) complex to a pre-translocation (PRE) complex, thus giving elongation factor G a second chance to translocate the tRNAs correctly. Binds to ribosomes in a GTP-dependent manner. This is Elongation factor 4 from Shewanella amazonensis (strain ATCC BAA-1098 / SB2B).